We begin with the raw amino-acid sequence, 149 residues long: 3-dehydroquinate dehydratase (149 aa).

The Proton acceptor role is filled by tyrosine 26. Residues asparagine 75, histidine 81, and aspartate 88 each coordinate substrate. The active-site Proton donor is histidine 101. Substrate is bound by residues 102 to 103 and arginine 112; that span reads LS.

Belongs to the type-II 3-dehydroquinase family. Homododecamer.

The catalysed reaction is 3-dehydroquinate = 3-dehydroshikimate + H2O. Its pathway is metabolic intermediate biosynthesis; chorismate biosynthesis; chorismate from D-erythrose 4-phosphate and phosphoenolpyruvate: step 3/7. Functionally, catalyzes a trans-dehydration via an enolate intermediate. This is 3-dehydroquinate dehydratase from Shewanella woodyi (strain ATCC 51908 / MS32).